The primary structure comprises 252 residues: Cell division protein ZapD (252 aa).

It belongs to the ZapD family. Interacts with FtsZ.

The protein resides in the cytoplasm. Functionally, cell division factor that enhances FtsZ-ring assembly. Directly interacts with FtsZ and promotes bundling of FtsZ protofilaments, with a reduction in FtsZ GTPase activity. In Dechloromonas aromatica (strain RCB), this protein is Cell division protein ZapD.